A 290-amino-acid chain; its full sequence is MKKKALLPLFLGIMIFLAGCDYSTPEKQDGFFFNTFVQPMKHLLQWLGNDVFHNNFGLAIIVLVLFIRLILLPFMLSNYKNSHMMREKMKVAKPEVDGIQEKVKRARTQEEKMAANQELMEVYKKYDMNPMKSMLGCLPILIQMPIIMGLYFVLKDKLVNGLSEHPHFLWFNLTKPDIWITVIAGVLYFIQAVVSSKTMPQEQRQMGYMMMVISPIMIIWISLQASSALGLYWSVSALFLVIQTHFANIYYSKLAKKEVQPFIEKYEREHNPSSKKKGKNTQVVSKKNKK.

The signal sequence occupies residues 1–19; that stretch reads MKKKALLPLFLGIMIFLAG. Cys20 carries N-palmitoyl cysteine lipidation. Cys20 carries the S-diacylglycerol cysteine lipid modification. A run of 5 helical transmembrane segments spans residues 56 to 76, 134 to 154, 176 to 196, 211 to 231, and 232 to 252; these read FGLAIIVLVLFIRLILLPFML, MLGCLPILIQMPIIMGLYFVL, PDIWITVIAGVLYFIQAVVSS, MVISPIMIIWISLQASSALGL, and YWSVSALFLVIQTHFANIYYS. The tract at residues 266–290 is disordered; the sequence is YEREHNPSSKKKGKNTQVVSKKNKK. The segment covering 280-290 has biased composition (polar residues); it reads NTQVVSKKNKK.

It belongs to the OXA1/ALB3/YidC family. Type 2 subfamily.

The protein localises to the cell membrane. Required for the insertion and/or proper folding and/or complex formation of integral membrane proteins into the membrane. Involved in integration of membrane proteins that insert both dependently and independently of the Sec translocase complex, as well as at least some lipoproteins. The protein is Membrane protein insertase YidC 2 of Staphylococcus epidermidis (strain ATCC 35984 / DSM 28319 / BCRC 17069 / CCUG 31568 / BM 3577 / RP62A).